The primary structure comprises 150 residues: Lipoprotein signal peptidase (150 aa).

The next 3 helical transmembrane spans lie at 5–25 (LSLV…NWVV), 59–79 (QQWF…WFLW), and 82–102 (MGQN…LGNF). Active-site residues include Asp-113 and Asp-129. The helical transmembrane segment at 124 to 144 (IFNIADILLSVGFVVLFIAIL) threads the bilayer.

This sequence belongs to the peptidase A8 family.

The protein resides in the cell membrane. The catalysed reaction is Release of signal peptides from bacterial membrane prolipoproteins. Hydrolyzes -Xaa-Yaa-Zaa-|-(S,diacylglyceryl)Cys-, in which Xaa is hydrophobic (preferably Leu), and Yaa (Ala or Ser) and Zaa (Gly or Ala) have small, neutral side chains.. Its pathway is protein modification; lipoprotein biosynthesis (signal peptide cleavage). Its function is as follows. This protein specifically catalyzes the removal of signal peptides from prolipoproteins. This Lactococcus lactis subsp. cremoris (strain SK11) protein is Lipoprotein signal peptidase.